Here is a 550-residue protein sequence, read N- to C-terminus: Chaperonin GroEL (550 aa).

ATP is bound by residues 30–33 (TLGP), K51, 87–91 (DGTTT), G415, and D496. The disordered stretch occupies residues 528–550 (EGGDMPAMPPGGMGGMGGMGGMM). A compositionally biased stretch (gly residues) spans 538–550 (GGMGGMGGMGGMM).

The protein belongs to the chaperonin (HSP60) family. In terms of assembly, forms a cylinder of 14 subunits composed of two heptameric rings stacked back-to-back. Interacts with the co-chaperonin GroES.

Its subcellular location is the cytoplasm. It carries out the reaction ATP + H2O + a folded polypeptide = ADP + phosphate + an unfolded polypeptide.. Together with its co-chaperonin GroES, plays an essential role in assisting protein folding. The GroEL-GroES system forms a nano-cage that allows encapsulation of the non-native substrate proteins and provides a physical environment optimized to promote and accelerate protein folding. The polypeptide is Chaperonin GroEL (Chlorobium phaeobacteroides (strain BS1)).